The chain runs to 277 residues: NADPH-dependent 7-cyano-7-deazaguanine reductase (277 aa).

Position 83–85 (83–85 (VES)) interacts with substrate. Residue 85-86 (SK) participates in NADPH binding. The active-site Thioimide intermediate is Cys184. The active-site Proton donor is the Asp191. Position 223 to 224 (223 to 224 (HE)) interacts with substrate. 252-253 (RG) is an NADPH binding site.

The protein belongs to the GTP cyclohydrolase I family. QueF type 2 subfamily. Homodimer.

It localises to the cytoplasm. It catalyses the reaction 7-aminomethyl-7-carbaguanine + 2 NADP(+) = 7-cyano-7-deazaguanine + 2 NADPH + 3 H(+). It participates in tRNA modification; tRNA-queuosine biosynthesis. Its function is as follows. Catalyzes the NADPH-dependent reduction of 7-cyano-7-deazaguanine (preQ0) to 7-aminomethyl-7-deazaguanine (preQ1). This is NADPH-dependent 7-cyano-7-deazaguanine reductase from Cupriavidus taiwanensis (strain DSM 17343 / BCRC 17206 / CCUG 44338 / CIP 107171 / LMG 19424 / R1) (Ralstonia taiwanensis (strain LMG 19424)).